Here is a 1388-residue protein sequence, read N- to C-terminus: CRISPR-associated endonuclease Cas9 2 (1388 aa).

The For RuvC-like nuclease domain role is filled by Asp10. Positions 10, 763, and 767 each coordinate Mg(2+). Residues 771–928 form the HNH Cas9-type domain; it reads TNQGKSNSQQ…DKAGFIQRQL (158 aa). His847 (proton acceptor for HNH nuclease domain) is an active-site residue. A Mg(2+)-binding site is contributed by His990. Over residues 1100-1109 the composition is skewed to basic and acidic residues; sequence EQNHGLDRGK. Residues 1100-1130 are disordered; that stretch reads EQNHGLDRGKPKGLFNANLSSKPKPNSNENL. Positions 1102-1388 are PAM-interacting domain (PI); that stretch reads NHGLDRGKPK…RIDLAKLGEG (287 aa). The segment covering 1116–1129 has biased composition (polar residues); the sequence is ANLSSKPKPNSNEN.

This sequence belongs to the CRISPR-associated protein Cas9 family. Subtype II-A subfamily. As to quaternary structure, monomer. Binds crRNA and tracrRNA. Mg(2+) serves as cofactor.

CRISPR (clustered regularly interspaced short palindromic repeat) is an adaptive immune system that provides protection against mobile genetic elements (viruses, transposable elements and conjugative plasmids). CRISPR clusters contain spacers, sequences complementary to antecedent mobile elements, and target invading nucleic acids. CRISPR clusters are transcribed and processed into CRISPR RNA (crRNA). In type II CRISPR systems correct processing of pre-crRNA requires a trans-encoded small RNA (tracrRNA), endogenous ribonuclease 3 (rnc) and this protein. The tracrRNA serves as a guide for ribonuclease 3-aided processing of pre-crRNA. Subsequently Cas9/crRNA/tracrRNA endonucleolytically cleaves linear or circular dsDNA target complementary to the spacer yielding blunt ends; Cas9 is inactive in the absence of the 2 guide RNAs (gRNA). Cas9 recognizes a 3'-G-rich protospacer adjacent motif (PAM, GGG in this organism) in the CRISPR repeat sequences to help distinguish self versus nonself, as targets within the bacterial CRISPR locus do not have PAMs. PAM recognition is also required for catalytic activity. Complements the gRNA coprocessing defect in a cas9 deletion in S.pyogenes strain 370, and cuts target DNA in Cas9:gRNAs mixing experiments with S.mutans strain UA159. The protein is CRISPR-associated endonuclease Cas9 2 of Streptococcus thermophilus (strain ATCC BAA-491 / LMD-9).